Reading from the N-terminus, the 637-residue chain is Threonine--tRNA ligase (637 aa).

Residues 1 to 61 (MLNITLPDGS…VEDSAVQIIT (61 aa)) form the TGS domain. The catalytic stretch occupies residues 242-533 (DHRKLGKQLD…LIENHAGSFP (292 aa)). Zn(2+) is bound by residues Cys-333, His-384, and His-510.

It belongs to the class-II aminoacyl-tRNA synthetase family. Homodimer. It depends on Zn(2+) as a cofactor.

Its subcellular location is the cytoplasm. The enzyme catalyses tRNA(Thr) + L-threonine + ATP = L-threonyl-tRNA(Thr) + AMP + diphosphate + H(+). Catalyzes the attachment of threonine to tRNA(Thr) in a two-step reaction: L-threonine is first activated by ATP to form Thr-AMP and then transferred to the acceptor end of tRNA(Thr). Also edits incorrectly charged L-seryl-tRNA(Thr). In Neisseria meningitidis serogroup A / serotype 4A (strain DSM 15465 / Z2491), this protein is Threonine--tRNA ligase.